The sequence spans 380 residues: Tubulin alpha chain (380 aa).

GTP contacts are provided by E46, S115, G119, T120, T154, N181, and N202. E46 contacts Mg(2+). E228 is a catalytic residue.

The protein belongs to the tubulin family. Dimer of alpha and beta chains. A typical microtubule is a hollow water-filled tube with an outer diameter of 25 nm and an inner diameter of 15 nM. Alpha-beta heterodimers associate head-to-tail to form protofilaments running lengthwise along the microtubule wall with the beta-tubulin subunit facing the microtubule plus end conferring a structural polarity. Microtubules usually have 13 protofilaments but different protofilament numbers can be found in some organisms and specialized cells. Requires Mg(2+) as cofactor.

The protein localises to the cytoplasm. The protein resides in the cytoskeleton. The enzyme catalyses GTP + H2O = GDP + phosphate + H(+). Its function is as follows. Tubulin is the major constituent of microtubules, a cylinder consisting of laterally associated linear protofilaments composed of alpha- and beta-tubulin heterodimers. Microtubules grow by the addition of GTP-tubulin dimers to the microtubule end, where a stabilizing cap forms. Below the cap, tubulin dimers are in GDP-bound state, owing to GTPase activity of alpha-tubulin. This is Tubulin alpha chain (TUB1) from Encephalitozoon hellem (Microsporidian parasite).